Here is a 211-residue protein sequence, read N- to C-terminus: Suppressor of RNA silencing p3 (211 aa).

This sequence belongs to the tenuiviruses p3 protein family. Homodimer.

The protein localises to the host cytoplasm. Functionally, acts as a suppressor of RNA-mediated gene silencing, also known as post-transcriptional gene silencing (PTGS), presumably through the binding of dsRNA. The chain is Suppressor of RNA silencing p3 from Avena sativa (Oat).